Reading from the N-terminus, the 386-residue chain is Cobalt-precorrin-5B C(1)-methyltransferase (386 aa).

The protein belongs to the CbiD family.

It carries out the reaction Co-precorrin-5B + S-adenosyl-L-methionine = Co-precorrin-6A + S-adenosyl-L-homocysteine. The protein operates within cofactor biosynthesis; adenosylcobalamin biosynthesis; cob(II)yrinate a,c-diamide from sirohydrochlorin (anaerobic route): step 6/10. Functionally, catalyzes the methylation of C-1 in cobalt-precorrin-5B to form cobalt-precorrin-6A. This is Cobalt-precorrin-5B C(1)-methyltransferase from Prochlorococcus marinus (strain MIT 9303).